We begin with the raw amino-acid sequence, 116 residues long: Vesicle-associated membrane protein 5 (116 aa).

Topologically, residues 1–72 (MAGIELERCQ…CWENIRYRIC (72 aa)) are cytoplasmic. The region spanning 5–65 (ELERCQQQAN…QNLAQKKCWE (61 aa)) is the v-SNARE coiled-coil homology domain. Phosphoserine is present on residues Ser41, Ser48, and Ser49. Residues 73–93 (VGLVVVGVLLIILIVLLVVFL) form a helical; Anchor for type IV membrane protein membrane-spanning segment. Over 94–116 (PQSSDSSSAPRTQDAGIASGPGN) the chain is Vesicular. The disordered stretch occupies residues 96–116 (SSDSSSAPRTQDAGIASGPGN).

Belongs to the synaptobrevin family. In terms of processing, (Microbial infection) Targeted and hydrolyzed by C.botulinum neurotoxin type X (BoNT/X) which hydrolyzes the 40-Arg-|-Ser-41 bond and probably inhibits neurotransmitter release. It remains unknown whether BoNT/X is ever produced, or what organisms it targets.

The protein localises to the cell membrane. Its subcellular location is the endomembrane system. It localises to the golgi apparatus. It is found in the trans-Golgi network membrane. Its function is as follows. May participate in trafficking events that are associated with myogenesis, such as myoblast fusion and/or GLUT4 trafficking. This Homo sapiens (Human) protein is Vesicle-associated membrane protein 5 (VAMP5).